Here is a 216-residue protein sequence, read N- to C-terminus: Cytidylate kinase (216 aa).

7 to 15 is a binding site for ATP; that stretch reads GPSGTGKST.

The protein belongs to the cytidylate kinase family. Type 1 subfamily.

It is found in the cytoplasm. The catalysed reaction is CMP + ATP = CDP + ADP. It catalyses the reaction dCMP + ATP = dCDP + ADP. This chain is Cytidylate kinase, found in Chlamydia felis (strain Fe/C-56) (Chlamydophila felis).